The chain runs to 546 residues: Serine/threonine-protein kinase Chk2 (546 aa).

Residues 1-70 (MKSHHQSHSS…SSHSSSGTLS (70 aa)) are disordered. Low complexity predominate over residues 8–70 (HSSTSSKAHD…SSHSSSGTLS (63 aa)). T68 bears the Phosphothreonine; by MAP3K20 mark. Position 71 is a phosphoserine; by PLK3 (S71). T77 is modified (phosphothreonine; by ATM and MAP3K20). At S82 the chain carries Phosphoserine; by PLK3. The FHA domain maps to 117–179 (YWFGRDKSCE…NGTFVNTELI (63 aa)). A Protein kinase domain is found at 224–490 (YIMSKTLGSG…TEEALNHPWL (267 aa)). Residues 231–238 (GSGACGEV), K253, and 306–312 (ELMEGGE) each bind ATP. The active-site Proton acceptor is D351. Residues 355–356 (EN) and D372 contribute to the ATP site. Residues 372–398 (DFGQSKILGETSLMRTLCGTPTYLAPE) form a T-loop/activation segment region. The residue at position 383 (S383) is a Phosphoserine; by autocatalysis. Phosphothreonine; by autocatalysis occurs at positions 387 and 391. S460 is modified (phosphoserine).

The protein belongs to the protein kinase superfamily. CAMK Ser/Thr protein kinase family. CHK2 subfamily. Homodimer. Homodimerization is part of the activation process but the dimer may dissociate following activation. Interacts with PML. Interacts with TP53. Interacts with RB1; phosphorylates RB1. Interacts with BRCA1. Interacts (phosphorylated at Thr-68) with MDC1; requires ATM-mediated phosphorylation of CHEK2. Interacts with TP53BP1; modulates CHEK2 phosphorylation at Thr-68 in response to ionizing radiation. Interacts with CDC25A; phosphorylates CDC25A and mediates its degradation in response to ionizing radiation. Interacts with CUL1; mediates CHEK2 ubiquitination and regulation. Interacts with CDKN2AIP. Interacts (via protein kinase domain) with CCAR2 (via N-terminus). Interacts with SIRT1. It depends on Mg(2+) as a cofactor. In terms of processing, phosphorylated. Phosphorylated at Ser-82 by PLK3 in response to DNA damage, promoting phosphorylation at Thr-77 by ATM and the G2/M transition checkpoint. Phosphorylation at Thr-77 induces homodimerization. Autophosphorylates at Thr-387 and Thr-391 in the T-loop/activation segment upon dimerization to become fully active. DNA damage-induced autophosphorylation at Ser-383 induces CUL1-mediated ubiquitination and regulates the pro-apoptotic function. Phosphorylation at Ser-460 also regulates ubiquitination. Phosphorylated by PLK4. Post-translationally, ubiquitinated. CUL1-mediated ubiquitination regulates the pro-apoptotic function. Ubiquitination may also regulate protein stability. Ubiquitinated by RNF8 via 'Lys-48'-linked ubiquitination. In terms of tissue distribution, ubiquitously expressed with higher levels in the thymus, spleen and colon (at protein level).

It is found in the nucleus. The protein localises to the PML body. Its subcellular location is the nucleoplasm. The enzyme catalyses L-seryl-[protein] + ATP = O-phospho-L-seryl-[protein] + ADP + H(+). The catalysed reaction is L-threonyl-[protein] + ATP = O-phospho-L-threonyl-[protein] + ADP + H(+). With respect to regulation, activated through phosphorylation at Thr-68 by ATM in response to DNA double-strand breaks. Activation is modulated by several mediators including MDC1 and TP53BP1. Induces homodimerization with exchange of the T-loop/activation segment between protomers and transphosphorylation of the protomers. The autophosphorylated kinase dimer is fully active. Negatively regulated by PPM1D through dephosphorylation of Thr-68. Its function is as follows. Serine/threonine-protein kinase which is required for checkpoint-mediated cell cycle arrest, activation of DNA repair and apoptosis in response to the presence of DNA double-strand breaks. May also negatively regulate cell cycle progression during unperturbed cell cycles. Following activation, phosphorylates numerous effectors preferentially at the consensus sequence [L-X-R-X-X-S/T]. Regulates cell cycle checkpoint arrest through phosphorylation of CDC25A, CDC25B and CDC25C, inhibiting their activity. Inhibition of CDC25 phosphatase activity leads to increased inhibitory tyrosine phosphorylation of CDK-cyclin complexes and blocks cell cycle progression. May also phosphorylate NEK6 which is involved in G2/M cell cycle arrest. Regulates DNA repair through phosphorylation of BRCA2, enhancing the association of RAD51 with chromatin which promotes DNA repair by homologous recombination. Also stimulates the transcription of genes involved in DNA repair (including BRCA2) through the phosphorylation and activation of the transcription factor FOXM1. Regulates apoptosis through the phosphorylation of p53/TP53, MDM4 and PML. Phosphorylation of p53/TP53 at 'Ser-20' by CHEK2 may alleviate inhibition by MDM2, leading to accumulation of active p53/TP53. Phosphorylation of MDM4 may also reduce degradation of p53/TP53. Also controls the transcription of pro-apoptotic genes through phosphorylation of the transcription factor E2F1. Tumor suppressor, it may also have a DNA damage-independent function in mitotic spindle assembly by phosphorylating BRCA1. Its absence may be a cause of the chromosomal instability observed in some cancer cells. Promotes the CCAR2-SIRT1 association and is required for CCAR2-mediated SIRT1 inhibition. Under oxidative stress, promotes ATG7 ubiquitination by phosphorylating the E3 ubiquitin ligase TRIM32 at 'Ser-56' leading to positive regulation of the autophagosme assembly. The polypeptide is Serine/threonine-protein kinase Chk2 (Mus musculus (Mouse)).